A 409-amino-acid chain; its full sequence is NADH-quinone oxidoreductase subunit D (409 aa).

Belongs to the complex I 49 kDa subunit family. As to quaternary structure, NDH-1 is composed of 14 different subunits. Subunits NuoB, C, D, E, F, and G constitute the peripheral sector of the complex.

The protein resides in the cell inner membrane. It catalyses the reaction a quinone + NADH + 5 H(+)(in) = a quinol + NAD(+) + 4 H(+)(out). Functionally, NDH-1 shuttles electrons from NADH, via FMN and iron-sulfur (Fe-S) centers, to quinones in the respiratory chain. The immediate electron acceptor for the enzyme in this species is believed to be ubiquinone. Couples the redox reaction to proton translocation (for every two electrons transferred, four hydrogen ions are translocated across the cytoplasmic membrane), and thus conserves the redox energy in a proton gradient. The polypeptide is NADH-quinone oxidoreductase subunit D (Helicobacter pylori (strain Shi470)).